A 507-amino-acid polypeptide reads, in one-letter code: MDYPPLKGAALAWVTLSLGLAVFMEVLDTTIANVAVPVIAGNLGAATTQGTWVITSFSVANAVSVPLTGFLAKRIGEVKLFTAAAAGFVIASWLCGIAPNLQSLVVFRILQGFIAGPLIPLSQSLLMASYPPAKRMLALALWAMTVVVAPVLGPILGGWISGNWHWGWIFFINIPIGIISAWITWKHLKHRETATVRTPTDYVGLTLMMVGIGALQMMLDRGKELDWFASGEIITLGITALVCLSYFIVWELGEKYPIVDLSLFKDRNFTVGAIATSLGFMVYMGTLTLLPLVLQTNLGYTSAWAGLAAAPVGILPVFLSPLIGRFGNKIDMRLLVTASFLTFAFTFYWRTDFYADMDIGNVIWPQFWQGVGVAMFFLPLTTITLSHMKGGQIAAAGSLSNFLRVLMGGVGVSVVSTLWERREALHHTRFAEHITPYSATLHETAAHLSQQGISDGQTLGIINNTITQQGFIIGSNEIFLAGSILFIVLIPIVWLAKPPFHSGGGGH.

The next 14 membrane-spanning stretches (helical) occupy residues 8–28 (GAAL…EVLD), 52–72 (WVIT…GFLA), 78–98 (VKLF…CGIA), 109–129 (ILQG…LMAS), 136–156 (MLAL…GPIL), 164–184 (WHWG…AWIT), 199–219 (PTDY…QMML), 233–253 (IITL…WELG), 274–294 (IATS…PLVL), 303–323 (AWAG…SPLI), 334–354 (LLVT…TDFY), 363–383 (IWPQ…LTTI), 399–419 (LSNF…STLW), and 478–498 (IFLA…LAKP).

The protein belongs to the major facilitator superfamily. EmrB family. As to quaternary structure, probably part of a tripartite efflux system FarAB-MtrE, which is composed of an inner membrane transporter, FarB, a periplasmic membrane fusion protein, FarA, and an outer membrane component, MtrE.

Its subcellular location is the cell inner membrane. In terms of biological role, mediates resistance to long-chained antibacterial fatty acids (FAs). Function is dependent on the MtrE outer membrane protein. This Neisseria gonorrhoeae protein is Fatty acid resistance protein FarB.